Consider the following 1112-residue polypeptide: Constitutive coactivator of PPAR-gamma-like protein 1 (1112 aa).

Residues 339 to 403 (PPHYLARPNP…YSLSEPALTL (65 aa)) are interaction with YES1, SRC and FYN. The tract at residues 372 to 525 (QAKPAVPQVP…GKGSHMGTVQ (154 aa)) is disordered. Composition is skewed to polar residues over residues 403–418 (LDTS…SYSN) and 433–445 (SPIN…SPNH). Residues 479–500 (GWEKTGSHAEPLARGDPGDQVK) are compositionally biased toward basic and acidic residues. The segment covering 503–512 (GSSTASSGSQ) has biased composition (polar residues). Thr653 carries the phosphothreonine modification. An RNA binding region spans residues 827–1112 (AEQAAKVEKM…LEAAVLNKEE (286 aa)). 3 positions are modified to omega-N-methylarginine: Arg871, Arg882, and Arg884. The disordered stretch occupies residues 919–943 (AFSGSDSSRTSKSQGGVQPIPSQGG). The segment covering 922-934 (GSDSSRTSKSQGG) has biased composition (polar residues). Lys930 is subject to N6-acetyllysine. Ser958 carries the post-translational modification Phosphoserine. Omega-N-methylarginine is present on residues Arg980 and Arg984. A phosphoserine mark is found at Ser1021 and Ser1042. The disordered stretch occupies residues 1030 to 1090 (KSKSGESKSS…PCNTNPHLNA (61 aa)). Positions 1070 to 1090 (HSESALNNDSKPCNTNPHLNA) are enriched in polar residues.

It belongs to the constitutive coactivator of PPAR-gamma family. As to quaternary structure, interacts with PURA. Interacts with SRC family protein kinases YES1, SRC and FYN. Upon tyrosine phosphorylation, interacts with PIK3R1. Interacts with IGF2BP1/IMP-1 in an RNA-dependent manner. Post-translationally, arg-980 is dimethylated, probably to asymmetric dimethylarginine. In terms of processing, phosphorylated on tyrosine by src family kinases upon ultraviolet exposure. As to expression, in the brain, predominantly expressed in the hippocampus, caudate putamen, cerebral cortex and cerebellum. Expression is restricted to neurons (at protein level).

Its subcellular location is the cytoplasm. It localises to the cell membrane. In terms of biological role, component of the oxidative stress-induced survival signaling. May regulate the activation of SRC family protein kinases. May act as a scaffolding protein enabling SRC family protein kinases to phosphorylate and activate PI3-kinase. Binds IGF2 RNA and promotes the production of IGF2 protein. The chain is Constitutive coactivator of PPAR-gamma-like protein 1 (FAM120A) from Mus musculus (Mouse).